Reading from the N-terminus, the 238-residue chain is Laccase-S (238 aa).

Plastocyanin-like domains are found at residues 4–87 (NVIA…YDPA) and 100–238 (HTII…IARY). N8 carries N-linked (GlcNAc...) asparagine glycosylation. Cu cation contacts are provided by H21, H23, H66, and H68. Cysteines 74 and 162 form a disulfide. N165 is a glycosylation site (N-linked (GlcNAc...) asparagine).

The protein belongs to the multicopper oxidase family. Monomer. It depends on Cu cation as a cofactor.

Its subcellular location is the secreted. It carries out the reaction 4 hydroquinone + O2 = 4 benzosemiquinone + 2 H2O. Its activity is regulated as follows. Activity is strongly promoted by toluene. Activity is promoted by magnesium, potassium, cadmium, zinc, nickel, sodium, lead and manganese ions. Completely inhibited by IAA (cysteine protease inhibitor), PMSF (serine protease inhibitor), DEP (histidine protease inhibitor) and NAI (tyrosine protease inhibitor). Inhibited by ethanol, acetone, SDS, and EDTA. Activity is strongly inhibited by mercury ions. Also inhibited by lithium, aluminum, calcium, barium and iron ions. Lignin degradation and detoxification of lignin-derived products. Has activity towards 2,2'-azino-bis(3-ethylbenzothiazoline-6-sulfonic acid) (ABTS). This Trametes hirsuta (White-rot fungus) protein is Laccase-S.